Reading from the N-terminus, the 492-residue chain is E3 ubiquitin-protein ligase TRIM35 (492 aa).

Met1 bears the N-acetylmethionine mark. 2 positions are modified to phosphoserine: Ser4 and Ser8. The RING-type zinc-finger motif lies at 21 to 61 (CAVCYDPFRDAVTLRCGHNFCRGCVSRCWEVQVSPTCPVCK). The B box-type zinc-finger motif lies at 96-137 (RFSRVCRLHRGQLSLFCLEDKELLCCSCQADPRHQGHRVQPV). The Zn(2+) site is built by Cys101, His104, Cys123, and His129. A coiled-coil region spans residues 210–249 (AEETRQKQLLADEKMKQLTEETEVLAHEIERLQMEMKEDD). Positions 283–486 (YLGSLQYRVW…LRICPLHISV (204 aa)) constitute a B30.2/SPRY domain.

As to quaternary structure, interacts with PKM isoform M2, but not isoform M1; this interaction may compete with that between PKM and FGFR1, and hence reduces FGFR1-dependent tyrosine phosphorylation of PKM. Interacts with IRF7; this interaction promotes IRF7 proteasomal degradation. Interacts with TRAF3; this interaction promotes TRAF3 activation.

Its subcellular location is the cytoplasm. The protein localises to the nucleus. The enzyme catalyses S-ubiquitinyl-[E2 ubiquitin-conjugating enzyme]-L-cysteine + [acceptor protein]-L-lysine = [E2 ubiquitin-conjugating enzyme]-L-cysteine + N(6)-ubiquitinyl-[acceptor protein]-L-lysine.. It participates in protein modification; protein ubiquitination. E3 ubiquitin-protein ligase that participates in multiple biological processes including cell death, glucose metabolism, and in particular, the innate immune response. Mediates 'Lys-63'-linked polyubiquitination of TRAF3 thereby promoting type I interferon production via RIG-I signaling pathway. Can also catalyze 'Lys-48'-linked polyubiquitination and proteasomal degradation of viral proteins such as influenza virus PB2. Acts as a negative feedback regulator of TLR7- and TLR9-triggered signaling. Mechanistically, promotes the 'Lys-48'-linked ubiquitination of IRF7 and induces its degradation via a proteasome-dependent pathway. Reduces FGFR1-dependent tyrosine phosphorylation of PKM, inhibiting PKM-dependent lactate production, glucose metabolism, and cell growth. In Pongo abelii (Sumatran orangutan), this protein is E3 ubiquitin-protein ligase TRIM35 (TRIM35).